The chain runs to 487 residues: Argininosuccinate lyase (487 aa).

It belongs to the lyase 1 family. Argininosuccinate lyase subfamily.

The protein resides in the cytoplasm. The enzyme catalyses 2-(N(omega)-L-arginino)succinate = fumarate + L-arginine. It functions in the pathway amino-acid biosynthesis; L-arginine biosynthesis; L-arginine from L-ornithine and carbamoyl phosphate: step 3/3. The protein is Argininosuccinate lyase of Methanococcus aeolicus (strain ATCC BAA-1280 / DSM 17508 / OCM 812 / Nankai-3).